The following is a 613-amino-acid chain: Dihydroxy-acid dehydratase (613 aa).

Asp-81 serves as a coordination point for Mg(2+). Cys-122 contributes to the [2Fe-2S] cluster binding site. Residues Asp-123 and Lys-124 each coordinate Mg(2+). Lys-124 is subject to N6-carboxylysine. Residue Cys-195 coordinates [2Fe-2S] cluster. Glu-491 serves as a coordination point for Mg(2+). The Proton acceptor role is filled by Ser-517.

This sequence belongs to the IlvD/Edd family. In terms of assembly, homodimer. The cofactor is [2Fe-2S] cluster. Mg(2+) serves as cofactor.

The catalysed reaction is (2R)-2,3-dihydroxy-3-methylbutanoate = 3-methyl-2-oxobutanoate + H2O. It catalyses the reaction (2R,3R)-2,3-dihydroxy-3-methylpentanoate = (S)-3-methyl-2-oxopentanoate + H2O. It functions in the pathway amino-acid biosynthesis; L-isoleucine biosynthesis; L-isoleucine from 2-oxobutanoate: step 3/4. The protein operates within amino-acid biosynthesis; L-valine biosynthesis; L-valine from pyruvate: step 3/4. Functionally, functions in the biosynthesis of branched-chain amino acids. Catalyzes the dehydration of (2R,3R)-2,3-dihydroxy-3-methylpentanoate (2,3-dihydroxy-3-methylvalerate) into 2-oxo-3-methylpentanoate (2-oxo-3-methylvalerate) and of (2R)-2,3-dihydroxy-3-methylbutanoate (2,3-dihydroxyisovalerate) into 2-oxo-3-methylbutanoate (2-oxoisovalerate), the penultimate precursor to L-isoleucine and L-valine, respectively. The chain is Dihydroxy-acid dehydratase from Vibrio parahaemolyticus serotype O3:K6 (strain RIMD 2210633).